The following is a 310-amino-acid chain: NADP-dependent D-sorbitol-6-phosphate dehydrogenase (310 aa).

Y48 serves as the catalytic Proton donor. H108 lines the substrate pocket. 210-272 provides a ligand contact to NADP(+); the sequence is TPLGGAAANK…SSKIQRLKEN (63 aa).

Belongs to the aldo/keto reductase family.

The enzyme catalyses D-sorbitol 6-phosphate + NADP(+) = aldehydo-D-glucose 6-phosphate + NADPH + H(+). Functionally, synthesizes sorbitol-6-phosphate, a key intermediate in the synthesis of sorbitol which is a major photosynthetic product in many members of the Rosaceae family. In Malus domestica (Apple), this protein is NADP-dependent D-sorbitol-6-phosphate dehydrogenase (S6PDH).